The primary structure comprises 186 residues: Peptide deformylase (186 aa).

Fe cation-binding residues include C113 and H156. E157 is a catalytic residue. Residue H160 participates in Fe cation binding.

Belongs to the polypeptide deformylase family. Fe(2+) serves as cofactor.

It carries out the reaction N-terminal N-formyl-L-methionyl-[peptide] + H2O = N-terminal L-methionyl-[peptide] + formate. Removes the formyl group from the N-terminal Met of newly synthesized proteins. Requires at least a dipeptide for an efficient rate of reaction. N-terminal L-methionine is a prerequisite for activity but the enzyme has broad specificity at other positions. The polypeptide is Peptide deformylase (Lactiplantibacillus plantarum (strain ATCC BAA-793 / NCIMB 8826 / WCFS1) (Lactobacillus plantarum)).